The following is a 372-amino-acid chain: 4-hydroxy-3-methylbut-2-en-1-yl diphosphate synthase (flavodoxin) (372 aa).

[4Fe-4S] cluster-binding residues include Cys270, Cys273, Cys305, and Glu312.

This sequence belongs to the IspG family. It depends on [4Fe-4S] cluster as a cofactor.

The enzyme catalyses (2E)-4-hydroxy-3-methylbut-2-enyl diphosphate + oxidized [flavodoxin] + H2O + 2 H(+) = 2-C-methyl-D-erythritol 2,4-cyclic diphosphate + reduced [flavodoxin]. It functions in the pathway isoprenoid biosynthesis; isopentenyl diphosphate biosynthesis via DXP pathway; isopentenyl diphosphate from 1-deoxy-D-xylulose 5-phosphate: step 5/6. Converts 2C-methyl-D-erythritol 2,4-cyclodiphosphate (ME-2,4cPP) into 1-hydroxy-2-methyl-2-(E)-butenyl 4-diphosphate. This Vibrio vulnificus (strain CMCP6) protein is 4-hydroxy-3-methylbut-2-en-1-yl diphosphate synthase (flavodoxin).